We begin with the raw amino-acid sequence, 556 residues long: Man(5)GlcNAc(2)-PP-dolichol translocation protein RFT1 (556 aa).

Helical transmembrane passes span 10–30, 41–61, 91–111, 129–149, 156–176, 184–204, 353–373, 389–409, 440–460, 461–477, 489–509, and 517–537; these read LLGA…TFGI, EVLG…LFLS, LTVP…LNWL, VAFS…AQVF, ILLN…IVTG, AFAI…YGFF, SVLN…FTFG, FVAG…IYLL, VSFL…GFIF, ANCI…TYYI, LLGL…GIVC, and LATH…SWAL.

It belongs to the RFT1 family.

It localises to the endoplasmic reticulum membrane. It participates in protein modification; protein glycosylation. Intramembrane glycolipid transporter that operates in the biosynthetic pathway of dolichol-linked oligosaccharides, the glycan precursors employed in protein asparagine (N)-glycosylation. The sequential addition of sugars to dolichol pyrophosphate produces dolichol-linked oligosaccharides containing fourteen sugars, including two GlcNAcs, nine mannoses and three glucoses. Once assembled, the oligosaccharide is transferred from the lipid to nascent proteins by oligosaccharyltransferases. The assembly of dolichol-linked oligosaccharides begins on the cytosolic side of the endoplasmic reticulum membrane and finishes in its lumen. RFT1 could mediate the translocation of the cytosolically oriented intermediate DolPP-GlcNAc2Man5, produced by ALG11, into the ER lumen where dolichol-linked oligosaccharides assembly continues. However, the intramembrane lipid transporter activity could not be confirmed in vitro. In Drosophila melanogaster (Fruit fly), this protein is Man(5)GlcNAc(2)-PP-dolichol translocation protein RFT1.